A 301-amino-acid chain; its full sequence is Ribosomal protein L11 methyltransferase (301 aa).

The S-adenosyl-L-methionine site is built by threonine 152, glycine 173, aspartate 195, and asparagine 236.

This sequence belongs to the methyltransferase superfamily. PrmA family.

The protein resides in the cytoplasm. The catalysed reaction is L-lysyl-[protein] + 3 S-adenosyl-L-methionine = N(6),N(6),N(6)-trimethyl-L-lysyl-[protein] + 3 S-adenosyl-L-homocysteine + 3 H(+). Its function is as follows. Methylates ribosomal protein L11. The sequence is that of Ribosomal protein L11 methyltransferase from Dictyoglomus thermophilum (strain ATCC 35947 / DSM 3960 / H-6-12).